Consider the following 132-residue polypeptide: uncharacterized protein (132 aa).

Disordered regions lie at residues 36–69 (GLAS…PNIS) and 97–132 (QIND…PTAR). Position 101 is a phosphoserine (S101).

Copurifies with proteins HOL1, MMP1, PEX7 and PLB1.

This is an uncharacterized protein from Saccharomyces cerevisiae (strain ATCC 204508 / S288c) (Baker's yeast).